The primary structure comprises 266 residues: Protein crossbronx-like (266 aa).

The UBC core domain occupies 15 to 178 (KQGYKILAEY…IQELAISSRR (164 aa)). The disordered stretch occupies residues 216-266 (EATCEDDSPPAELLGHIDSSRQLDEDEANQRGKLQAATTDLQHGARCSVAQ).

The protein belongs to the ubiquitin-conjugating enzyme family. FTS subfamily.

This is Protein crossbronx-like from Drosophila ananassae (Fruit fly).